A 124-amino-acid chain; its full sequence is Small ribosomal subunit protein bS16 (124 aa).

Over residues 84-110 (EKAERKNLKKGEPGKAAKERAEKRAAR) the composition is skewed to basic and acidic residues. A disordered region spans residues 84-124 (EKAERKNLKKGEPGKAAKERAEKRAAREAAANAPAEEAASE). A compositionally biased stretch (low complexity) spans 111-124 (EAAANAPAEEAASE).

Belongs to the bacterial ribosomal protein bS16 family.

The sequence is that of Small ribosomal subunit protein bS16 from Paracoccus denitrificans (strain Pd 1222).